A 152-amino-acid polypeptide reads, in one-letter code: UPF0225 protein YchJ (152 aa).

The protein belongs to the UPF0225 family.

The polypeptide is UPF0225 protein YchJ (ychJ) (Salmonella typhimurium (strain LT2 / SGSC1412 / ATCC 700720)).